The primary structure comprises 205 residues: MRPLTPRQAEILELIKCNIAETGMPPTRAEIAKRLGFKSANAAEEHLKALAKKGCIEIIPGTSRGIRLAQTEELEEQGLPLIGQVAAGEPILAQEHVEQHYQVDPNMFHPSADFLLRVRGDSMKDIGILEGDLLAVHKAEQARNGQVVVARVEDDVTVKRFEKKGSTVYLHAENEDYSPIVVDLTNQSLSIEGLAVGVIRNGDWQ.

Positions 28–48 form a DNA-binding region, H-T-H motif; the sequence is RAEIAKRLGFKSANAAEEHLK. Residues Ser-122 and Lys-159 each act as for autocatalytic cleavage activity in the active site.

It belongs to the peptidase S24 family. In terms of assembly, homodimer.

The catalysed reaction is Hydrolysis of Ala-|-Gly bond in repressor LexA.. Functionally, represses a number of genes involved in the response to DNA damage (SOS response), including recA and lexA. In the presence of single-stranded DNA, RecA interacts with LexA causing an autocatalytic cleavage which disrupts the DNA-binding part of LexA, leading to derepression of the SOS regulon and eventually DNA repair. This Shewanella woodyi (strain ATCC 51908 / MS32) protein is LexA repressor.